The chain runs to 193 residues: Thymidine kinase (193 aa).

ATP-binding positions include G16–S23 and D89–Q92. E90 (proton acceptor) is an active-site residue. Residues C146, C149, C184, and C187 each coordinate Zn(2+).

It belongs to the thymidine kinase family. As to quaternary structure, homotetramer.

The protein resides in the cytoplasm. The catalysed reaction is thymidine + ATP = dTMP + ADP + H(+). The sequence is that of Thymidine kinase from Caldanaerobacter subterraneus subsp. tengcongensis (strain DSM 15242 / JCM 11007 / NBRC 100824 / MB4) (Thermoanaerobacter tengcongensis).